The sequence spans 378 residues: Protein KlaB (378 aa).

The protein belongs to the TelA family.

In terms of biological role, belongs to the kla operon, which is associated with cryptic tellurite resistance, and IncW plasmid fertility inhibition. This Escherichia coli protein is Protein KlaB (klaB).